Reading from the N-terminus, the 648-residue chain is Glutenin, high molecular weight subunit DY10 (648 aa).

A signal peptide spans 1-21 (MAKRLVLFAAVVIALVALTTA). Residues 127 to 648 (YYPGVTSPRQ…EGGDALSASQ (522 aa)) form a disordered region. Composition is skewed to low complexity over residues 141–166 (PGQA…QGQQ), 195–236 (QQPG…WQQG), and 243–263 (QQLG…GQQG). Over residues 264-274 (HYPTSLQQPGQ) the composition is skewed to polar residues. 5 stretches are compositionally biased toward low complexity: residues 284–353 (QQQP…GQQG), 360–416 (QQPG…GQQG), 459–502 (QQPG…PGQG), 510–523 (QGYY…PGQG), and 531–565 (QGHC…GQQG). Residues 578 to 592 (QQSGQGQQSGQGHQP) are compositionally biased toward gly residues. Over residues 593–604 (GQGQQSGQEQQG) the composition is skewed to low complexity.

It belongs to the gliadin/glutenin family. In terms of assembly, disulfide-bridge linked aggregates.

Glutenins are high-molecular weight seed storage proteins of wheat endosperm. Thought to be responsible for the visco-elastic property of wheat dough. The protein is Glutenin, high molecular weight subunit DY10 (GLU-D1-2B) of Triticum aestivum (Wheat).